The primary structure comprises 378 residues: Putative gustatory receptor 22f (378 aa).

Residues 1–13 lie on the Cytoplasmic side of the membrane; sequence MKMFQPRRGFSCH. The chain crosses the membrane as a helical span at residues 14-34; it reads LAWFMLQTTLYASWLLGLFPF. Topologically, residues 35 to 48 are extracellular; the sequence is TFDSRRKQLKRSRW. The chain crosses the membrane as a helical span at residues 49 to 69; sequence LLLYGFVLHSLAMCLAMSSHL. Over 70–88 the chain is Cytoplasmic; it reads ASKQRRKYNAFERNPLLEK. Residues 89-109 form a helical membrane-spanning segment; that stretch reads IYMQFQVTTFFTISVLLLMNV. At 110 to 143 the chain is on the extracellular side; sequence WKSNTVRKIANELLTLEGQVKDLLTLKNCPNFNC. A helical transmembrane segment spans residues 144–164; sequence FVIKKHVAAIGQFVISIYFCL. The Cytoplasmic portion of the chain corresponds to 165–178; that stretch reads CQENSYPKILKILC. The helical transmembrane segment at 179–199 threads the bilayer; sequence CLPSVGLQLIIMHFHTEIILV. Residues 200 to 245 are Extracellular-facing; that stretch reads YRYVWLVNETLEDSHHLSSSRIHALASLYDRLLKLSELVVACNDLQ. N-linked (GlcNAc...) asparagine glycosylation occurs at asparagine 207. Residues 246–266 form a helical membrane-spanning segment; the sequence is LILMLIIYLIGNTVQIFFLIV. At 267-354 the chain is on the cytoplasmic side; sequence LGVSMNKRYI…LCGLFSINHN (88 aa). Residues 355-375 form a helical membrane-spanning segment; that stretch reads MGFQMIITSFLYLVYLLQFDF. The Extracellular segment spans residues 376 to 378; the sequence is MNL.

This sequence belongs to the insect chemoreceptor superfamily. Gustatory receptor (GR) family. Gr22e subfamily. In terms of tissue distribution, taste bristles in the foreleg and labial palps.

The protein resides in the cell membrane. Functionally, probable gustatory receptor which mediates acceptance or avoidance behavior, depending on its substrates. In Drosophila melanogaster (Fruit fly), this protein is Putative gustatory receptor 22f (Gr22f).